A 352-amino-acid chain; its full sequence is Alpha-2-HS-glycoprotein (352 aa).

An N-terminal signal peptide occupies residues 1-18 (MKSLVLLLCFAQLWSCQS). One can recognise a Cystatin fetuin-A-type 1 domain in the interval 19-133 (APQGAGLGFR…QFRVLHAQCH (115 aa)). 6 disulfides stabilise this stretch: C32-C343, C89-C100, C114-C132, C146-C149, C208-C219, and C230-C247. N-linked (GlcNAc...) asparagine glycosylation occurs at N99. S134 is subject to Phosphoserine. At T135 the chain carries Phosphothreonine. A Phosphoserine modification is found at S138. A Cystatin fetuin-A-type 2 domain is found at 144–250 (KFCPRCPILI…EEVSVACKLF (107 aa)). 2 N-linked (GlcNAc...) asparagine glycosylation sites follow: N156 and N176. Residues 256–273 (PANANPAGPAPTVGQAAP) are compositionally biased toward low complexity. The tract at residues 256-280 (PANANPAGPAPTVGQAAPVAPPAGP) is disordered. Phosphoserine is present on residues S309, S313, S316, and S318. Positions 319 to 338 (GEVLHSPKVGQPGDAGAAGP) are disordered. A compositionally biased stretch (low complexity) spans 328 to 338 (GQPGDAGAAGP).

Belongs to the fetuin family. Post-translationally, undergoes complex post-translational modification involving N-glycosylation, and addition of fucose and sialic acid residues. Phosphorylation occurs at a serine residue. In terms of processing, phosphorylated by FAM20C in the extracellular medium. As to expression, synthesized in liver and secreted by the hepatocytes in the blood.

The protein resides in the secreted. Functionally, could inhibit both insulin-receptor tyrosine kinase activity and insulin-stimulated receptor autophosphorylation and, concomitantly, antagonize the mitogenic effect of the hormone in cultured rat hepatoma cells. This Rattus norvegicus (Rat) protein is Alpha-2-HS-glycoprotein (Ahsg).